The chain runs to 233 residues: Large ribosomal subunit protein uL1 (233 aa).

The protein belongs to the universal ribosomal protein uL1 family. Part of the 50S ribosomal subunit.

Binds directly to 23S rRNA. The L1 stalk is quite mobile in the ribosome, and is involved in E site tRNA release. Its function is as follows. Protein L1 is also a translational repressor protein, it controls the translation of the L11 operon by binding to its mRNA. This Rhizobium johnstonii (strain DSM 114642 / LMG 32736 / 3841) (Rhizobium leguminosarum bv. viciae) protein is Large ribosomal subunit protein uL1.